The primary structure comprises 299 residues: MLDNTRLRIAIQKSGRLSDDSRELLARCGIKINLHTQRLIAMAENMPIDILRVRDDDIPGLVMDGVVDLGIIGENVLEEELLNRRAQGEDPRYFTLRRLDFGGCRLSLATPVDEAWDGPAALDGKRIATSYPHLLKRYLDQKGVSFKSCLLNGSVEVAPRAGLADAICDLVSTGATLEANGLREVEVIYRSKACLIQRDGEMAQSKQELIDKLLTRIQGVIQARESKYIMMHAPSERLEEVIALLPGAERPTILPLAGEQQRVAMHMVSSETLFWETMEKLKALGASSILVLPIEKMME.

Belongs to the ATP phosphoribosyltransferase family. Long subfamily. Equilibrium between an active dimeric form, an inactive hexameric form and higher aggregates. Interconversion between the various forms is largely reversible and is influenced by the natural substrates and inhibitors of the enzyme. Mg(2+) is required as a cofactor.

Its subcellular location is the cytoplasm. It carries out the reaction 1-(5-phospho-beta-D-ribosyl)-ATP + diphosphate = 5-phospho-alpha-D-ribose 1-diphosphate + ATP. It functions in the pathway amino-acid biosynthesis; L-histidine biosynthesis; L-histidine from 5-phospho-alpha-D-ribose 1-diphosphate: step 1/9. Feedback inhibited by histidine. Functionally, catalyzes the condensation of ATP and 5-phosphoribose 1-diphosphate to form N'-(5'-phosphoribosyl)-ATP (PR-ATP). Has a crucial role in the pathway because the rate of histidine biosynthesis seems to be controlled primarily by regulation of HisG enzymatic activity. This Salmonella agona (strain SL483) protein is ATP phosphoribosyltransferase.